Consider the following 641-residue polypeptide: Mannosyl-oligosaccharide 1,2-alpha-mannosidase IB (641 aa).

T2 carries the post-translational modification N-acetylthreonine. Over 2–36 (TTPALLPLSGRRIPPLNLGPPSFPHHRATLRLSEK) the chain is Cytoplasmic. The helical; Signal-anchor for type II membrane protein transmembrane segment at 37-57 (FILLLILSAFITLCFGAFFFL) threads the bilayer. Topologically, residues 58 to 641 (PDSSKHKRFD…TTLSGNPAVR (584 aa)) are lumenal. The disordered stretch occupies residues 153–175 (NKPLPPVPIPNLVGIRGGDPEDN). C462 and C494 form a disulfide bridge. E508 acts as the Proton donor in catalysis. T619 contacts Ca(2+). N-linked (GlcNAc...) asparagine glycosylation is present at N631.

This sequence belongs to the glycosyl hydrolase 47 family. Ca(2+) is required as a cofactor. As to expression, highest levels of expression in placenta and testis.

It is found in the golgi apparatus membrane. It catalyses the reaction N(4)-(alpha-D-Man-(1-&gt;2)-alpha-D-Man-(1-&gt;2)-alpha-D-Man-(1-&gt;3)-[alpha-D-Man-(1-&gt;2)-alpha-D-Man-(1-&gt;3)-[alpha-D-Man-(1-&gt;2)-alpha-D-Man-(1-&gt;6)]-alpha-D-Man-(1-&gt;6)]-beta-D-Man-(1-&gt;4)-beta-D-GlcNAc-(1-&gt;4)-beta-D-GlcNAc)-L-asparaginyl-[protein] (N-glucan mannose isomer 9A1,2,3B1,2,3) + 4 H2O = N(4)-(alpha-D-Man-(1-&gt;3)-[alpha-D-Man-(1-&gt;3)-[alpha-D-Man-(1-&gt;6)]-alpha-D-Man-(1-&gt;6)]-beta-D-Man-(1-&gt;4)-beta-D-GlcNAc-(1-&gt;4)-beta-D-GlcNAc)-L-asparaginyl-[protein] (N-glucan mannose isomer 5A1,2) + 4 beta-D-mannose. The catalysed reaction is N(4)-(alpha-D-Man-(1-&gt;2)-alpha-D-Man-(1-&gt;2)-alpha-D-Man-(1-&gt;3)-[alpha-D-Man-(1-&gt;3)-[alpha-D-Man-(1-&gt;2)-alpha-D-Man-(1-&gt;6)]-alpha-D-Man-(1-&gt;6)]-beta-D-Man-(1-&gt;4)-beta-D-GlcNAc-(1-&gt;4)-beta-D-GlcNAc)-L-asparaginyl-[protein] (N-glucan mannose isomer 8A1,2,3B1,3) + 3 H2O = N(4)-(alpha-D-Man-(1-&gt;3)-[alpha-D-Man-(1-&gt;3)-[alpha-D-Man-(1-&gt;6)]-alpha-D-Man-(1-&gt;6)]-beta-D-Man-(1-&gt;4)-beta-D-GlcNAc-(1-&gt;4)-beta-D-GlcNAc)-L-asparaginyl-[protein] (N-glucan mannose isomer 5A1,2) + 3 beta-D-mannose. It participates in protein modification; protein glycosylation. With respect to regulation, inhibited by both 1-deoxymannojirimycin and kifunensine. In terms of biological role, involved in the maturation of Asn-linked oligosaccharides. Progressively trim alpha-1,2-linked mannose residues from Man(9)GlcNAc(2) to produce Man(5)GlcNAc(2). This chain is Mannosyl-oligosaccharide 1,2-alpha-mannosidase IB (MAN1A2), found in Homo sapiens (Human).